Consider the following 360-residue polypeptide: 3-dehydroquinate synthase (360 aa).

Residues 71-76 (DGEQYK), 105-109 (GVVGD), 129-130 (TT), K142, K151, and 169-172 (TLNT) contribute to the NAD(+) site. Positions 184, 248, and 265 each coordinate Zn(2+).

This sequence belongs to the sugar phosphate cyclases superfamily. Dehydroquinate synthase family. Requires Co(2+) as cofactor. Zn(2+) serves as cofactor. It depends on NAD(+) as a cofactor.

The protein localises to the cytoplasm. It carries out the reaction 7-phospho-2-dehydro-3-deoxy-D-arabino-heptonate = 3-dehydroquinate + phosphate. It participates in metabolic intermediate biosynthesis; chorismate biosynthesis; chorismate from D-erythrose 4-phosphate and phosphoenolpyruvate: step 2/7. Catalyzes the conversion of 3-deoxy-D-arabino-heptulosonate 7-phosphate (DAHP) to dehydroquinate (DHQ). This Coxiella burnetii (strain CbuK_Q154) (Coxiella burnetii (strain Q154)) protein is 3-dehydroquinate synthase.